The chain runs to 272 residues: Undecaprenyl-diphosphatase (272 aa).

Helical transmembrane passes span 42–62 (FGLSFDVALHLGTLVAVVVFF), 92–112 (YLVLAATVPAALIGYLWEDFF), 120–140 (WVVVFNLAFVGLLFLVAEAVG), 149–169 (MGFAEAVGIGLAQAAALVPGV), 194–214 (FLMSAPIIAGAGTLQLGEVLA), 224–244 (MFAVGFLCSAVVGYLAIRFFI), and 252–272 (LRAFAYYRFALAALVAALLLL).

It belongs to the UppP family.

The protein resides in the cell membrane. It catalyses the reaction di-trans,octa-cis-undecaprenyl diphosphate + H2O = di-trans,octa-cis-undecaprenyl phosphate + phosphate + H(+). In terms of biological role, catalyzes the dephosphorylation of undecaprenyl diphosphate (UPP). Confers resistance to bacitracin. This Rubrobacter xylanophilus (strain DSM 9941 / JCM 11954 / NBRC 16129 / PRD-1) protein is Undecaprenyl-diphosphatase.